The chain runs to 715 residues: Polyribonucleotide nucleotidyltransferase (715 aa).

Mg(2+)-binding residues include Asp-498 and Asp-504. Residues 565–625 enclose the KH domain; sequence PKVCMMQIKP…ETVKKTVAFI (61 aa). The S1 motif domain occupies 635-706; that stretch reads GTCYQASILR…DRGRIDFLLL (72 aa).

This sequence belongs to the polyribonucleotide nucleotidyltransferase family. Mg(2+) is required as a cofactor.

It is found in the cytoplasm. It carries out the reaction RNA(n+1) + phosphate = RNA(n) + a ribonucleoside 5'-diphosphate. Involved in mRNA degradation. Catalyzes the phosphorolysis of single-stranded polyribonucleotides processively in the 3'- to 5'-direction. The protein is Polyribonucleotide nucleotidyltransferase of Onion yellows phytoplasma (strain OY-M).